Consider the following 541-residue polypeptide: Phosphoenolpyruvate carboxykinase (ATP) (541 aa).

Substrate is bound by residues R67, Y207, and K213. ATP contacts are provided by residues K213, H232, and 248 to 256; that span reads GLSGTGKTT. Residues K213 and H232 each contribute to the Mn(2+) site. D269 serves as a coordination point for Mn(2+). Residues E297, R333, 449–450, and T455 contribute to the ATP site; that span reads RI. Residue R333 coordinates substrate.

Belongs to the phosphoenolpyruvate carboxykinase (ATP) family. Monomer. It depends on Mn(2+) as a cofactor.

The protein localises to the cytoplasm. It carries out the reaction oxaloacetate + ATP = phosphoenolpyruvate + ADP + CO2. Its pathway is carbohydrate biosynthesis; gluconeogenesis. Functionally, involved in the gluconeogenesis. Catalyzes the conversion of oxaloacetate (OAA) to phosphoenolpyruvate (PEP) through direct phosphoryl transfer between the nucleoside triphosphate and OAA. The sequence is that of Phosphoenolpyruvate carboxykinase (ATP) from Aliivibrio salmonicida (strain LFI1238) (Vibrio salmonicida (strain LFI1238)).